A 62-amino-acid polypeptide reads, in one-letter code: Large ribosomal subunit protein eL37 (62 aa).

Positions 20, 23, 35, and 38 each coordinate Zn(2+). A C4-type zinc finger spans residues 20–38 (CRRCGRRAYHVRKGYCAAC).

Belongs to the eukaryotic ribosomal protein eL37 family. Zn(2+) serves as cofactor.

Functionally, binds to the 23S rRNA. This is Large ribosomal subunit protein eL37 from Methanopyrus kandleri (strain AV19 / DSM 6324 / JCM 9639 / NBRC 100938).